The primary structure comprises 306 residues: Pantothenate synthetase (306 aa).

37–44 (MGALHEGH) contributes to the ATP binding site. The active-site Proton donor is H44. Q69 contributes to the (R)-pantoate binding site. A beta-alanine-binding site is contributed by Q69. Position 155–158 (155–158 (GEKD)) interacts with ATP. Q161 lines the (R)-pantoate pocket. ATP-binding positions include V184 and 192 to 195 (KSSR).

Belongs to the pantothenate synthetase family. As to quaternary structure, homodimer.

The protein localises to the cytoplasm. It carries out the reaction (R)-pantoate + beta-alanine + ATP = (R)-pantothenate + AMP + diphosphate + H(+). Its pathway is cofactor biosynthesis; (R)-pantothenate biosynthesis; (R)-pantothenate from (R)-pantoate and beta-alanine: step 1/1. In terms of biological role, catalyzes the condensation of pantoate with beta-alanine in an ATP-dependent reaction via a pantoyl-adenylate intermediate. In Corynebacterium jeikeium (strain K411), this protein is Pantothenate synthetase.